Consider the following 152-residue polypeptide: Small ribosomal subunit protein uS17A (152 aa).

This sequence belongs to the universal ribosomal protein uS17 family. Component of the small ribosomal subunit (SSU). Mature yeast ribosomes consist of a small (40S) and a large (60S) subunit. The 40S small subunit contains 1 molecule of ribosomal RNA (18S rRNA) and at least 33 different proteins. The large 60S subunit contains 3 rRNA molecules (25S, 5.8S and 5S rRNA) and at least 46 different proteins.

The protein resides in the cytoplasm. The protein localises to the nucleus. Its function is as follows. Component of the ribosome, a large ribonucleoprotein complex responsible for the synthesis of proteins in the cell. The small ribosomal subunit (SSU) binds messenger RNAs (mRNAs) and translates the encoded message by selecting cognate aminoacyl-transfer RNA (tRNA) molecules. The large subunit (LSU) contains the ribosomal catalytic site termed the peptidyl transferase center (PTC), which catalyzes the formation of peptide bonds, thereby polymerizing the amino acids delivered by tRNAs into a polypeptide chain. The nascent polypeptides leave the ribosome through a tunnel in the LSU and interact with protein factors that function in enzymatic processing, targeting, and the membrane insertion of nascent chains at the exit of the ribosomal tunnel. The protein is Small ribosomal subunit protein uS17A (rps1101) of Schizosaccharomyces pombe (strain 972 / ATCC 24843) (Fission yeast).